The primary structure comprises 153 residues: 3-hydroxyacyl-[acyl-carrier-protein] dehydratase FabZ (153 aa).

Residue His-57 is part of the active site.

It belongs to the thioester dehydratase family. FabZ subfamily.

The protein resides in the cytoplasm. It catalyses the reaction a (3R)-hydroxyacyl-[ACP] = a (2E)-enoyl-[ACP] + H2O. Functionally, involved in unsaturated fatty acids biosynthesis. Catalyzes the dehydration of short chain beta-hydroxyacyl-ACPs and long chain saturated and unsaturated beta-hydroxyacyl-ACPs. The polypeptide is 3-hydroxyacyl-[acyl-carrier-protein] dehydratase FabZ (Xanthomonas oryzae pv. oryzae (strain MAFF 311018)).